Here is a 344-residue protein sequence, read N- to C-terminus: Dihydroorotate dehydrogenase (quinone) (344 aa).

Residues 65–69 and T89 contribute to the FMN site; that span reads AGFDK. K69 is a substrate binding site. 114-118 contacts substrate; it reads NRMGF. FMN is bound by residues N145 and N178. N178 provides a ligand contact to substrate. The active-site Nucleophile is the S181. Residue N183 coordinates substrate. 2 residues coordinate FMN: K215 and T243. 244 to 245 contacts substrate; sequence NT. FMN contacts are provided by residues G269, G298, and 319 to 320; that span reads YT.

Belongs to the dihydroorotate dehydrogenase family. Type 2 subfamily. As to quaternary structure, monomer. The cofactor is FMN.

The protein resides in the cell membrane. It catalyses the reaction (S)-dihydroorotate + a quinone = orotate + a quinol. It participates in pyrimidine metabolism; UMP biosynthesis via de novo pathway; orotate from (S)-dihydroorotate (quinone route): step 1/1. Its function is as follows. Catalyzes the conversion of dihydroorotate to orotate with quinone as electron acceptor. This is Dihydroorotate dehydrogenase (quinone) from Clavibacter sepedonicus (Clavibacter michiganensis subsp. sepedonicus).